The primary structure comprises 507 residues: Maturase K (507 aa).

This sequence belongs to the intron maturase 2 family. MatK subfamily.

The protein resides in the plastid. Its subcellular location is the chloroplast. In terms of biological role, usually encoded in the trnK tRNA gene intron. Probably assists in splicing its own and other chloroplast group II introns. This chain is Maturase K, found in Liriodendron tulipifera (Tuliptree).